The sequence spans 156 residues: 6,7-dimethyl-8-ribityllumazine synthase (156 aa).

Residues Phe-23, 57–59 (AFE), and 81–83 (AVI) contribute to the 5-amino-6-(D-ribitylamino)uracil site. 86–87 (ST) lines the (2S)-2-hydroxy-3-oxobutyl phosphate pocket. The active-site Proton donor is the His-89. 5-amino-6-(D-ribitylamino)uracil is bound at residue Phe-114. (2S)-2-hydroxy-3-oxobutyl phosphate is bound at residue Arg-128.

It belongs to the DMRL synthase family.

It carries out the reaction (2S)-2-hydroxy-3-oxobutyl phosphate + 5-amino-6-(D-ribitylamino)uracil = 6,7-dimethyl-8-(1-D-ribityl)lumazine + phosphate + 2 H2O + H(+). It participates in cofactor biosynthesis; riboflavin biosynthesis; riboflavin from 2-hydroxy-3-oxobutyl phosphate and 5-amino-6-(D-ribitylamino)uracil: step 1/2. In terms of biological role, catalyzes the formation of 6,7-dimethyl-8-ribityllumazine by condensation of 5-amino-6-(D-ribitylamino)uracil with 3,4-dihydroxy-2-butanone 4-phosphate. This is the penultimate step in the biosynthesis of riboflavin. The sequence is that of 6,7-dimethyl-8-ribityllumazine synthase from Sulfurospirillum multivorans (Dehalospirillum multivorans).